Consider the following 214-residue polypeptide: Methyltransferase HEMK2 (214 aa).

S-adenosyl-L-homocysteine is bound by residues Thr29, Glu51, Gly53, Asp77, Asp103, Leu104, and Asn122. S-adenosyl-L-methionine-binding residues include Thr29, Glu51, Gly53, Asp77, Asp103, Leu104, and Asn122. A protein is bound at residue Asn122.

This sequence belongs to the eukaryotic/archaeal PrmC-related family. Heterodimer; heterodimerization with TRMT112 is required for S-adenosyl-L-methionine-binding. As to quaternary structure, does not interact with TRMT112. In terms of processing, ubiquitinated, leading to its degradation by the proteasome. Widely expressed, with highest expression in parathyroid and pituitary glands, followed by adrenal gland and kidney, and lowest expression in leukocytes and mammary gland.

It is found in the nucleus. The enzyme catalyses L-lysyl-[histone] + S-adenosyl-L-methionine = N(6)-methyl-L-lysyl-[histone] + S-adenosyl-L-homocysteine + H(+). It carries out the reaction L-glutaminyl-[protein] + S-adenosyl-L-methionine = N(5)-methyl-L-glutaminyl-[protein] + S-adenosyl-L-homocysteine + H(+). The catalysed reaction is methylarsonous acid + S-adenosyl-L-methionine = dimethylarsinate + S-adenosyl-L-homocysteine + 2 H(+). In terms of biological role, methyltransferase that can methylate proteins and, to a lower extent, arsenic. Catalytic subunit of a heterodimer with TRMT112, which monomethylates 'Lys-12' of histone H4 (H4K12me1), a modification present at the promoters of numerous genes encoding cell cycle regulators. Catalytic subunit of a heterodimer with TRMT112, which catalyzes N5-methylation of Glu residue of proteins with a Gly-Gln-Xaa-Xaa-Xaa-Arg motif. Methylates ETF1 on 'Gln-185'; ETF1 needs to be complexed to ERF3 in its GTP-bound form to be efficiently methylated. May also play a role in the modulation of arsenic-induced toxicity by mediating the conversion of monomethylarsonous acid (3+) into the less toxic dimethylarsonic acid. It however only plays a limited role in arsenic metabolism compared with AS3MT. In Homo sapiens (Human), this protein is Methyltransferase HEMK2.